The chain runs to 44 residues: Thymosin beta-4 (44 aa).

Positions 1 to 25 are enriched in basic and acidic residues; sequence MADKPDMAEIEKFDKSKLKKTETQE. A disordered region spans residues 1–44; sequence MADKPDMAEIEKFDKSKLKKTETQEKNPLPSKETIEQEKQAGES. Residue Ala-2 is modified to N-acetylalanine. Lys-4 carries the post-translational modification N6-acetyllysine. Lys-12 is modified (N6-acetyllysine; alternate). Residue Lys-12 forms a Glycyl lysine isopeptide (Lys-Gly) (interchain with G-Cter in SUMO2); alternate linkage. Thr-23 carries the post-translational modification Phosphothreonine. Lys-26 carries the post-translational modification N6-acetyllysine. Ser-31 carries the phosphoserine modification. Lys-32 is subject to N6-acetyllysine. Residues 33 to 44 are compositionally biased toward basic and acidic residues; the sequence is ETIEQEKQAGES. Thr-34 is subject to Phosphothreonine. Lys-39 is subject to N6-acetyllysine.

This sequence belongs to the thymosin beta family. As to expression, originally found in thymus but it is widely distributed in many tissues.

The protein resides in the cytoplasm. It localises to the cytoskeleton. In terms of biological role, plays an important role in the organization of the cytoskeleton. Binds to and sequesters actin monomers (G actin) and therefore inhibits actin polymerization. Functionally, seraspenide inhibits the entry of hematopoietic pluripotent stem cells into the S-phase. The chain is Thymosin beta-4 (TMSB4) from Oryctolagus cuniculus (Rabbit).